Consider the following 249-residue polypeptide: 3-deoxy-D-manno-octulosonic acid kinase (249 aa).

The active site involves aspartate 175.

It belongs to the protein kinase superfamily. KdkA/RfaP family.

Its subcellular location is the cell inner membrane. The enzyme catalyses an alpha-Kdo-(2-&gt;6)-lipid IVA + ATP = a 4-O-phospho-alpha-Kdo-(2-&gt;6)-lipid IVA + ADP + H(+). It participates in bacterial outer membrane biogenesis; LPS core biosynthesis. In terms of biological role, catalyzes the ATP-dependent phosphorylation of the 3-deoxy-D-manno-octulosonic acid (Kdo) residue in Kdo-lipid IV(A) at the 4-OH position. This Xanthomonas axonopodis pv. citri (strain 306) protein is 3-deoxy-D-manno-octulosonic acid kinase.